We begin with the raw amino-acid sequence, 329 residues long: Very long chain fatty acid elongase 7 (329 aa).

Helical transmembrane passes span Tyr26–Val46, Leu66–Ile86, Gly114–Met134, Val146–Gly166, Phe170–Ala190, Leu205–Phe225, and Ile233–Phe253.

The protein belongs to the ELO family.

The protein localises to the membrane. It catalyses the reaction a very-long-chain acyl-CoA + malonyl-CoA + H(+) = a very-long-chain 3-oxoacyl-CoA + CO2 + CoA. In terms of biological role, catalyzes the first and rate-limiting reaction of the four reactions that constitute the long-chain fatty acids elongation cycle. This endoplasmic reticulum-bound enzymatic process allows the addition of 2 carbons to the chain of long- and very long-chain fatty acids (VLCFAs) per cycle. This Drosophila melanogaster (Fruit fly) protein is Very long chain fatty acid elongase 7.